Here is a 456-residue protein sequence, read N- to C-terminus: UDP-N-acetylmuramoylalanine--D-glutamate ligase (456 aa).

Residue 122-128 (GSNGKST) participates in ATP binding.

Belongs to the MurCDEF family.

It is found in the cytoplasm. It catalyses the reaction UDP-N-acetyl-alpha-D-muramoyl-L-alanine + D-glutamate + ATP = UDP-N-acetyl-alpha-D-muramoyl-L-alanyl-D-glutamate + ADP + phosphate + H(+). It functions in the pathway cell wall biogenesis; peptidoglycan biosynthesis. In terms of biological role, cell wall formation. Catalyzes the addition of glutamate to the nucleotide precursor UDP-N-acetylmuramoyl-L-alanine (UMA). In Saccharophagus degradans (strain 2-40 / ATCC 43961 / DSM 17024), this protein is UDP-N-acetylmuramoylalanine--D-glutamate ligase.